A 56-amino-acid chain; its full sequence is Large ribosomal subunit protein bL32 (56 aa).

Belongs to the bacterial ribosomal protein bL32 family.

The protein is Large ribosomal subunit protein bL32 of Brevibacillus brevis (strain 47 / JCM 6285 / NBRC 100599).